A 227-amino-acid polypeptide reads, in one-letter code: Cytochrome c oxidase subunit 2 (227 aa).

Over 1–14 (MAYPFQLGLQDATS) the chain is Mitochondrial intermembrane. A helical transmembrane segment spans residues 15–45 (PIMEELLHFHDHTLMIVFLISSLVLYIISLM). The Mitochondrial matrix segment spans residues 46–59 (LTTKLTHTSTMDAQ). A helical transmembrane segment spans residues 60 to 87 (EVETVWTILPAIILVLIALPSLRILYMM). Over 88-227 (DEINNPSLTV…YFETWSALMV (140 aa)) the chain is Mitochondrial intermembrane. The Cu cation site is built by H161, C196, E198, C200, H204, and M207. E198 lines the Mg(2+) pocket. Y218 is subject to Phosphotyrosine.

This sequence belongs to the cytochrome c oxidase subunit 2 family. In terms of assembly, component of the cytochrome c oxidase (complex IV, CIV), a multisubunit enzyme composed of 14 subunits. The complex is composed of a catalytic core of 3 subunits MT-CO1, MT-CO2 and MT-CO3, encoded in the mitochondrial DNA, and 11 supernumerary subunits COX4I, COX5A, COX5B, COX6A, COX6B, COX6C, COX7A, COX7B, COX7C, COX8 and NDUFA4, which are encoded in the nuclear genome. The complex exists as a monomer or a dimer and forms supercomplexes (SCs) in the inner mitochondrial membrane with NADH-ubiquinone oxidoreductase (complex I, CI) and ubiquinol-cytochrome c oxidoreductase (cytochrome b-c1 complex, complex III, CIII), resulting in different assemblies (supercomplex SCI(1)III(2)IV(1) and megacomplex MCI(2)III(2)IV(2)). Found in a complex with TMEM177, COA6, COX18, COX20, SCO1 and SCO2. Interacts with TMEM177 in a COX20-dependent manner. Interacts with COX20. Interacts with COX16. Requires Cu cation as cofactor.

It localises to the mitochondrion inner membrane. The enzyme catalyses 4 Fe(II)-[cytochrome c] + O2 + 8 H(+)(in) = 4 Fe(III)-[cytochrome c] + 2 H2O + 4 H(+)(out). Its function is as follows. Component of the cytochrome c oxidase, the last enzyme in the mitochondrial electron transport chain which drives oxidative phosphorylation. The respiratory chain contains 3 multisubunit complexes succinate dehydrogenase (complex II, CII), ubiquinol-cytochrome c oxidoreductase (cytochrome b-c1 complex, complex III, CIII) and cytochrome c oxidase (complex IV, CIV), that cooperate to transfer electrons derived from NADH and succinate to molecular oxygen, creating an electrochemical gradient over the inner membrane that drives transmembrane transport and the ATP synthase. Cytochrome c oxidase is the component of the respiratory chain that catalyzes the reduction of oxygen to water. Electrons originating from reduced cytochrome c in the intermembrane space (IMS) are transferred via the dinuclear copper A center (CU(A)) of subunit 2 and heme A of subunit 1 to the active site in subunit 1, a binuclear center (BNC) formed by heme A3 and copper B (CU(B)). The BNC reduces molecular oxygen to 2 water molecules using 4 electrons from cytochrome c in the IMS and 4 protons from the mitochondrial matrix. The protein is Cytochrome c oxidase subunit 2 (MT-CO2) of Cerdocyon thous (Crab-eating fox).